Consider the following 317-residue polypeptide: tRNA-cytidine(32) 2-sulfurtransferase (317 aa).

The short motif at 63 to 68 is the PP-loop motif element; it reads SGGKDS. 3 residues coordinate [4Fe-4S] cluster: Cys-138, Cys-141, and Cys-229.

Belongs to the TtcA family. As to quaternary structure, homodimer. Mg(2+) serves as cofactor. Requires [4Fe-4S] cluster as cofactor.

The protein localises to the cytoplasm. It catalyses the reaction cytidine(32) in tRNA + S-sulfanyl-L-cysteinyl-[cysteine desulfurase] + AH2 + ATP = 2-thiocytidine(32) in tRNA + L-cysteinyl-[cysteine desulfurase] + A + AMP + diphosphate + H(+). It functions in the pathway tRNA modification. Catalyzes the ATP-dependent 2-thiolation of cytidine in position 32 of tRNA, to form 2-thiocytidine (s(2)C32). The sulfur atoms are provided by the cysteine/cysteine desulfurase (IscS) system. The sequence is that of tRNA-cytidine(32) 2-sulfurtransferase from Janthinobacterium sp. (strain Marseille) (Minibacterium massiliensis).